The following is a 117-amino-acid chain: UPF0375 protein Y45F10C.2 (117 aa).

The N-terminal stretch at 1 to 20 is a signal peptide; it reads MNSFVSTVLLLSVTIALVSG.

It belongs to the UPF0375 family. Expressed in the uterine epithelium.

It localises to the secreted. Negatively regulates the egg-laying rate by promoting retention of fertilized eggs. The sequence is that of UPF0375 protein Y45F10C.2 from Caenorhabditis elegans.